The chain runs to 258 residues: Peptidase inhibitor 15 (258 aa).

The signal sequence occupies residues 1–21; sequence MIEMISISAAFLLSLLCETCG. A propeptide spanning residues 22-60 is cleaved from the precursor; that stretch reads LVLPKSSDLAIAASNYTIIKPDLSARLDPVKAPKARRKR. N-linked (GlcNAc...) asparagine glycans are attached at residues N36 and N124. In terms of domain architecture, SCP spans 71 to 211; the sequence is VEYHNQVRGK…RRAVYLVCNY (141 aa).

This sequence belongs to the CRISP family.

Its subcellular location is the secreted. In terms of biological role, serine protease inhibitor which displays weak inhibitory activity against trypsin. May be involved in facial patterning during embryonic development. This is Peptidase inhibitor 15 (pi15) from Xenopus laevis (African clawed frog).